The primary structure comprises 386 residues: Succinate--CoA ligase [ADP-forming] subunit beta (386 aa).

Residues 9–244 (KELLRQYGVA…LDEEDPKEIE (236 aa)) enclose the ATP-grasp domain. ATP-binding positions include Lys-46, 53 to 55 (GRG), Glu-99, Cys-102, and Glu-107. Positions 199 and 213 each coordinate Mg(2+). Substrate is bound by residues Asn-264 and 321–323 (GIM).

The protein belongs to the succinate/malate CoA ligase beta subunit family. As to quaternary structure, heterotetramer of two alpha and two beta subunits. The cofactor is Mg(2+).

The enzyme catalyses succinate + ATP + CoA = succinyl-CoA + ADP + phosphate. It catalyses the reaction GTP + succinate + CoA = succinyl-CoA + GDP + phosphate. It participates in carbohydrate metabolism; tricarboxylic acid cycle; succinate from succinyl-CoA (ligase route): step 1/1. In terms of biological role, succinyl-CoA synthetase functions in the citric acid cycle (TCA), coupling the hydrolysis of succinyl-CoA to the synthesis of either ATP or GTP and thus represents the only step of substrate-level phosphorylation in the TCA. The beta subunit provides nucleotide specificity of the enzyme and binds the substrate succinate, while the binding sites for coenzyme A and phosphate are found in the alpha subunit. This is Succinate--CoA ligase [ADP-forming] subunit beta from Halalkalibacterium halodurans (strain ATCC BAA-125 / DSM 18197 / FERM 7344 / JCM 9153 / C-125) (Bacillus halodurans).